The chain runs to 98 residues: NADH-ubiquinone oxidoreductase chain 4L (98 aa).

Helical transmembrane passes span 2–22 (PSISTNITLAFITALLGMLIF), 29–49 (SLLCLEGMMLSMFILSTLTIL), and 61–81 (ILLLVFAACEAAVGLALLVTV).

The protein belongs to the complex I subunit 4L family. In terms of assembly, core subunit of respiratory chain NADH dehydrogenase (Complex I) which is composed of 45 different subunits.

Its subcellular location is the mitochondrion inner membrane. It carries out the reaction a ubiquinone + NADH + 5 H(+)(in) = a ubiquinol + NAD(+) + 4 H(+)(out). In terms of biological role, core subunit of the mitochondrial membrane respiratory chain NADH dehydrogenase (Complex I) which catalyzes electron transfer from NADH through the respiratory chain, using ubiquinone as an electron acceptor. Part of the enzyme membrane arm which is embedded in the lipid bilayer and involved in proton translocation. The chain is NADH-ubiquinone oxidoreductase chain 4L (MT-ND4L) from Hapalemur aureus (Golden bamboo lemur).